The following is a 94-amino-acid chain: MSRSISKGPFVDLHLINKVIVVRKNNDKRPIKTWSRRSTILPDFIGLTISVHNGRQHIPIFITENMVGHKLGEFSHTRTFKGHAGDKKAAGSKR.

This sequence belongs to the universal ribosomal protein uS19 family.

Functionally, protein S19 forms a complex with S13 that binds strongly to the 16S ribosomal RNA. The polypeptide is Small ribosomal subunit protein uS19 (Nitrosomonas eutropha (strain DSM 101675 / C91 / Nm57)).